The sequence spans 89 residues: Envelope glycoprotein N (89 aa).

The first 24 residues, 1–24 (MAPGRGVLLLICLCLMDNVSQVVC), serve as a signal peptide directing secretion. The Virion surface segment spans residues 25 to 56 (SQNSTTPSKFPTFYSYDCNADTYAPQLTSFST). Residues 57-77 (IWTLLNVLVMTIACVIYLIYM) form a helical membrane-spanning segment. The Intravirion portion of the chain corresponds to 78-89 (CFNKFVATMTNT).

The protein belongs to the herpesviridae glycoprotein N family. Interacts (via N-terminus) with gM (via N-terminus). The gM-gN heterodimer forms the gCII complex.

Its subcellular location is the virion membrane. It localises to the host membrane. The protein resides in the host Golgi apparatus. The protein localises to the host trans-Golgi network. Envelope glycoprotein necessary for proper maturation of gM and modulation of its membrane fusion activity. Also plays a critical role in virion morphogenesis. The chain is Envelope glycoprotein N from Equine herpesvirus 2 (strain 86/87) (EHV-2).